The primary structure comprises 121 residues: Cell division protein FtsL (121 aa).

Over 1 to 34 the chain is Cytoplasmic; it reads MISRVTEALSKVKGSIGSNERHALPGVIGDDLLR. The helical transmembrane segment at 35–57 threads the bilayer; it reads FGKLPLCLFICIILTAVTVVTTA. At 58–121 the chain is on the periplasmic side; the sequence is HHTRLLTAQR…PSQENIVVQK (64 aa).

The protein belongs to the FtsL family. Part of a complex composed of FtsB, FtsL and FtsQ.

It is found in the cell inner membrane. In terms of biological role, essential cell division protein. May link together the upstream cell division proteins, which are predominantly cytoplasmic, with the downstream cell division proteins, which are predominantly periplasmic. The chain is Cell division protein FtsL from Salmonella typhimurium (strain LT2 / SGSC1412 / ATCC 700720).